We begin with the raw amino-acid sequence, 216 residues long: Adenylate kinase (216 aa).

13 to 18 contacts ATP; that stretch reads GAGKGT. The segment at 33-66 is NMP; that stretch reads TTGDALRANKDMDISDMDTEYDTPREYMEAGDLV. Residues Thr34, Arg39, 64 to 66, 89 to 92, and Gln96 contribute to the AMP site; these read DLV and GYPR. Positions 125 to 162 are LID; sequence GRRVCDDCGTNYHVEFNQPEEDGVCDECGGDLIQRDDD. Arg126 lines the ATP pocket. Zn(2+) is bound by residues Cys129, Cys132, Cys149, and Cys152. AMP-binding residues include Arg159 and Arg170. Residue Gln198 participates in ATP binding.

The protein belongs to the adenylate kinase family. In terms of assembly, monomer.

The protein resides in the cytoplasm. The catalysed reaction is AMP + ATP = 2 ADP. It participates in purine metabolism; AMP biosynthesis via salvage pathway; AMP from ADP: step 1/1. Catalyzes the reversible transfer of the terminal phosphate group between ATP and AMP. Plays an important role in cellular energy homeostasis and in adenine nucleotide metabolism. This is Adenylate kinase from Haloarcula marismortui (strain ATCC 43049 / DSM 3752 / JCM 8966 / VKM B-1809) (Halobacterium marismortui).